A 512-amino-acid polypeptide reads, in one-letter code: Maturase K (512 aa).

It belongs to the intron maturase 2 family. MatK subfamily.

The protein localises to the plastid. The protein resides in the chloroplast. In terms of biological role, usually encoded in the trnK tRNA gene intron. Probably assists in splicing its own and other chloroplast group II introns. This chain is Maturase K, found in Lilium henryi (Henry's lily).